We begin with the raw amino-acid sequence, 236 residues long: Protein N-lysine methyltransferase METTL21A (236 aa).

S-adenosyl-L-methionine is bound by residues Trp-47, 73 to 75 (GAG), Asp-112, Trp-143, and Ala-161.

The protein belongs to the methyltransferase superfamily. METTL21 family. Interacts with heat shock 70 family members; at least some of these proteins are methylation substrates.

Its subcellular location is the cytoplasm. The catalysed reaction is L-lysyl-[protein] + 3 S-adenosyl-L-methionine = N(6),N(6),N(6)-trimethyl-L-lysyl-[protein] + 3 S-adenosyl-L-homocysteine + 3 H(+). Functionally, protein-lysine methyltransferase that selectively trimethylates residues in heat shock protein 70 (HSP70) family members. Contributes to the in vivo trimethylation of Lys residues in HSPA1 and HSPA8. In vitro methylates 'Lys-561' in HSPA1, 'Lys-564' in HSPA2, 'Lys-585' in HSPA5, 'Lys-563' in HSPA6 and 'Lys-561' in HSPA8. This Pongo abelii (Sumatran orangutan) protein is Protein N-lysine methyltransferase METTL21A (METTL21A).